A 352-amino-acid chain; its full sequence is C-C chemokine receptor type 5 (352 aa).

Topologically, residues 1–30 (MDYQVSSPTYDIDYDTSEPCQKINVKQIAA) are extracellular. Position 3 is a sulfotyrosine (tyrosine 3). Serine 6 and serine 7 each carry an O-linked (GalNAc...) serine glycan. Sulfotyrosine occurs at positions 10 and 14. Disulfide bonds link cysteine 20-cysteine 269 and cysteine 101-cysteine 178. The helical transmembrane segment at 31 to 58 (RLLPPLYSLVFIFGFVGNMLVILVLINC) threads the bilayer. Over 59–68 (KRLKSMTDIY) the chain is Cytoplasmic. A helical membrane pass occupies residues 69–89 (LLNLAISDLFFLLTVPFWAHY). The Extracellular segment spans residues 90–102 (AAAQWDFGNTMCQ). A helical membrane pass occupies residues 103 to 124 (LLTGLYFIGFFSGIFFIILLTI). Topologically, residues 125-141 (DRYLAIVHAVFALKART) are cytoplasmic. Residues 142-166 (VTFGVVTSVITWVVAVFASLPGIIF) traverse the membrane as a helical segment. Residues 167–198 (TRSQKEGLHYTCSSHFPYSQYQFWKNFQTLKI) are Extracellular-facing. Residues 199–218 (VILGLVLPLLVMVICYSGIL) form a helical membrane-spanning segment. Residues 219–235 (KTLLRCRNEKKRHRAVR) are Cytoplasmic-facing. A helical transmembrane segment spans residues 236 to 260 (LIFTIMIVYFLFWAPYNIVLLLNTF). Residues 261–277 (QEFFGLNNCSSSNRLDQ) are Extracellular-facing. The chain crosses the membrane as a helical span at residues 278–301 (AMQVTETLGMTHCCINPIIYAFVG). Topologically, residues 302–352 (EKFRNYLLVFFQKHIAKHFCKCCSIFQQEAPERASSVYTRSTGEQEISVGL) are cytoplasmic. Residues cysteine 321, cysteine 323, and cysteine 324 are each lipidated (S-palmitoyl cysteine). 4 positions are modified to phosphoserine; by BARK1: serine 336, serine 337, serine 342, and serine 349.

This sequence belongs to the G-protein coupled receptor 1 family. In terms of assembly, interacts with PRAF2. Efficient ligand binding to CCL3/MIP-1alpha and CCL4/MIP-1beta requires sulfation, O-glycosylation and sialic acid modifications. Glycosylation on Ser-6 is required for efficient binding of CCL4. Interacts with GRK2. Interacts with ARRB1 and ARRB2. Interacts with CNIH4. Interacts with S100A4; this interaction stimulates T-lymphocyte chemotaxis. Sulfated on at least 2 of the N-terminal tyrosines. Sulfation is required for efficient binding of the chemokines, CCL3 and CCL4. In terms of processing, palmitoylation in the C-terminal is important for cell surface expression. Post-translationally, phosphorylation on serine residues in the C-terminal is stimulated by binding CC chemokines especially by APO-RANTES. O-glycosylated, but not N-glycosylated. Ser-6 appears to be the major site even if Ser-7 may be also O-glycosylated. Also sialylated glycans present which contribute to chemokine binding. Thr-16 and Ser-17 may also be glycosylated and, if so, with small moieties such as a T-antigen.

It localises to the cell membrane. Its function is as follows. Receptor for a number of inflammatory CC-chemokines including CCL3/MIP-1-alpha, CCL4/MIP-1-beta and RANTES and subsequently transduces a signal by increasing the intracellular calcium ion level. May play a role in the control of granulocytic lineage proliferation or differentiation. Participates in T-lymphocyte migration to the infection site by acting as a chemotactic receptor. This is C-C chemokine receptor type 5 (CCR5) from Nomascus leucogenys (Northern white-cheeked gibbon).